The primary structure comprises 51 residues: Epididymal sperm protein E (51 aa).

A zinc finger lies at 8 to 39; sequence CVRCRRKTPSFNSKTVTFRNKRRAIRSHCAYC.

As to expression, sperm.

The protein resides in the nucleus. The chain is Epididymal sperm protein E from Sepia officinalis (Common cuttlefish).